A 473-amino-acid chain; its full sequence is Flavonol 3-O-glucosyltransferase UGT89B1 (473 aa).

H25 functions as the Proton acceptor in the catalytic mechanism. H25 contributes to the an anthocyanidin binding site. The Charge relay role is filled by D127. 7 residues coordinate UDP-alpha-D-glucose: A348, Q350, H365, W368, N369, S370, and E373. A388 lines the an anthocyanidin pocket. The UDP-alpha-D-glucose site is built by D389 and Q390.

This sequence belongs to the UDP-glycosyltransferase family.

The enzyme catalyses a flavonol + UDP-alpha-D-glucose = a flavonol 3-O-beta-D-glucoside + UDP + H(+). It carries out the reaction a 7-O-hydroxy-flavonol + UDP-alpha-D-glucose = a flavonol 7-O-beta-D-glucoside + UDP + H(+). Possesses quercetin 3-O-glucosyltransferase, 7-O-glucosyltransferase and 4'-O-glucosyltransferase activities in vitro. Also active in vitro on benzoates and benzoate derivatives. The chain is Flavonol 3-O-glucosyltransferase UGT89B1 from Arabidopsis thaliana (Mouse-ear cress).